The following is a 295-amino-acid chain: Small ribosomal subunit protein uS2 (295 aa).

Residues 273–295 form a disordered region; sequence WAASSAPAAETLADPAADPSVKW. The segment covering 274–295 has biased composition (low complexity); the sequence is AASSAPAAETLADPAADPSVKW.

This sequence belongs to the universal ribosomal protein uS2 family. In terms of assembly, component of the small ribosomal subunit. Mature ribosomes consist of a small (40S) and a large (60S) subunit. The 40S subunit contains about 33 different proteins and 1 molecule of RNA (18S). The 60S subunit contains about 49 different proteins and 3 molecules of RNA (25S, 5.8S and 5S). Interacts with RPS21.

The protein localises to the cytoplasm. Required for the assembly and/or stability of the 40S ribosomal subunit. Required for the processing of the 20S rRNA-precursor to mature 18S rRNA in a late step of the maturation of 40S ribosomal subunits. The chain is Small ribosomal subunit protein uS2 from Paracoccidioides lutzii (strain ATCC MYA-826 / Pb01) (Paracoccidioides brasiliensis).